We begin with the raw amino-acid sequence, 28 residues long: leu operon leader peptide (28 aa).

Its function is as follows. Involved in control of the biosynthesis of leucine. This Shigella flexneri protein is leu operon leader peptide (leuL).